The primary structure comprises 665 residues: Methionine--tRNA ligase (665 aa).

The short motif at 12-22 is the 'HIGH' region element; the sequence is YYPSGKLHIGS. Positions 308–312 match the 'KMSKS' region motif; the sequence is KMSKS. Lys311 contributes to the ATP binding site. Residues 562 to 665 enclose the tRNA-binding domain; the sequence is TFDAVEIRVA…SSVPNGSIIG (104 aa).

Belongs to the class-I aminoacyl-tRNA synthetase family. MetG type 2B subfamily. Homodimer.

It localises to the cytoplasm. The catalysed reaction is tRNA(Met) + L-methionine + ATP = L-methionyl-tRNA(Met) + AMP + diphosphate. Functionally, is required not only for elongation of protein synthesis but also for the initiation of all mRNA translation through initiator tRNA(fMet) aminoacylation. This chain is Methionine--tRNA ligase (metG), found in Streptococcus pyogenes serotype M18 (strain MGAS8232).